Reading from the N-terminus, the 554-residue chain is Sesquiterpene synthase 14b (554 aa).

Mg(2+) contacts are provided by Asp-305, Asp-309, Asp-449, and Glu-457. The short motif at Asp-305–Asp-309 is the DDXXD motif element.

Belongs to the terpene synthase family. Tpsa subfamily. Mg(2+) is required as a cofactor. Mn(2+) serves as cofactor.

It catalyses the reaction (2E,6E)-farnesyl diphosphate = (E)-gamma-bisabolene + diphosphate. It carries out the reaction (2Z,6Z)-farnesyl diphosphate = (E)-gamma-bisabolene + diphosphate. The catalysed reaction is (2Z,6Z)-farnesyl diphosphate = (E)-alpha-bisabolene + diphosphate. The enzyme catalyses (2Z,6Z)-farnesyl diphosphate = (Z)-beta-farnesene + diphosphate. It catalyses the reaction (2E,6E)-farnesyl diphosphate = (E)-beta-farnesene + diphosphate. It carries out the reaction (2E,6E)-farnesyl diphosphate = (+)-thujopsene + diphosphate. The catalysed reaction is (2Z,6Z)-farnesyl diphosphate = (E)-beta-farnesene + diphosphate. The enzyme catalyses (2E,6E)-farnesyl diphosphate = (Z)-beta-farnesene + diphosphate. It catalyses the reaction (2Z,6Z)-farnesyl diphosphate = beta-acoradiene + diphosphate. It carries out the reaction (2Z,6Z)-farnesyl diphosphate = alpha-acoradiene + diphosphate. The catalysed reaction is (2Z,6Z)-farnesyl diphosphate = beta-bisabolene + diphosphate. The enzyme catalyses (2E,6E)-farnesyl diphosphate = (-)-alpha-cedrene + diphosphate. It catalyses the reaction (2E,6E)-farnesyl diphosphate = beta-bisabolene + diphosphate. It carries out the reaction (2E,6E)-farnesyl diphosphate = beta-acoradiene + diphosphate. The catalysed reaction is (2Z,6Z)-farnesyl diphosphate = (-)-alpha-cedrene + diphosphate. The enzyme catalyses (2E)-geranyl diphosphate = terpinolene + diphosphate. It catalyses the reaction (2E)-geranyl diphosphate = limonene + diphosphate. It carries out the reaction (2E)-geranyl diphosphate = beta-myrcene + diphosphate. It participates in secondary metabolite biosynthesis; terpenoid biosynthesis. Functionally, sesquiterpene synthase involved in the biosynthesis of volatile compounds. Mediates the conversion of (2E,6E)-farnesyl diphosphate ((EE)-FPP) into (+)-thujopsene, beta-bisabolene, alpha-cederene, beta-acoradiene, (E)-gamma-bisabolene, (Z)-alpha-bisabolene, (Z)-beta-farnesene and (E)-beta-farnesene, and of (2Z,6Z)-farnesyl diphosphate ((ZZ)-FPP) into (E)-gamma-bisabolene, (E)-alpha-bisabolene, (E)-beta-farnesene, (Z)-beta-farnesene, beta-bisabolene, beta-acoradiene and alpha-acoradiene. Can act with a low efficiency as a monoterpene synthase with geranyl diphosphate (GPP) as substrate, thus producing beta-myrcene, limonene and terpinolene. This Solanum habrochaites (Wild tomato) protein is Sesquiterpene synthase 14b.